We begin with the raw amino-acid sequence, 462 residues long: Fumarate hydratase class II (462 aa).

Substrate-binding positions include 97 to 99 (SGT), 127 to 130 (HPND), 137 to 139 (SSN), and T185. The active-site Proton donor/acceptor is H186. Residue S316 is part of the active site. Residues S317 and 322–324 (KVN) each bind substrate.

The protein belongs to the class-II fumarase/aspartase family. Fumarase subfamily. Homotetramer.

The protein localises to the cytoplasm. It carries out the reaction (S)-malate = fumarate + H2O. It participates in carbohydrate metabolism; tricarboxylic acid cycle; (S)-malate from fumarate: step 1/1. Functionally, involved in the TCA cycle. Catalyzes the stereospecific interconversion of fumarate to L-malate. The sequence is that of Fumarate hydratase class II from Halalkalibacterium halodurans (strain ATCC BAA-125 / DSM 18197 / FERM 7344 / JCM 9153 / C-125) (Bacillus halodurans).